Here is a 325-residue protein sequence, read N- to C-terminus: Olfactory receptor 5H6 (325 aa).

Residues 1–41 (MFLYLCFIFQRTCSEEMEEENATLLTEFVLTGFLHQPDCKI) are Extracellular-facing. Asn-21 is a glycosylation site (N-linked (GlcNAc...) asparagine). A helical transmembrane segment spans residues 42 to 62 (PLFLAFLVIYLITIMGNLGLI). Residues 63-70 (VLIWKDPH) lie on the Cytoplasmic side of the membrane. A helical membrane pass occupies residues 71-91 (LHIPMYLFLGSLAFVDASLSS). Over 92–115 (TVTPKMLINFLAKSKMISLSECMV) the chain is Extracellular. An intrachain disulfide couples Cys-113 to Cys-205. A helical membrane pass occupies residues 116-136 (QFFSLVTTVTTECFLLATMAY). The Cytoplasmic portion of the chain corresponds to 137–155 (DRYVAICKALLYPVIMTNE). A helical membrane pass occupies residues 156–176 (LCIQLLVLSFIGGLLHALIHE). Over 177-212 (AFSFRLTFCNSNIIQHFYCDIIPLLKISCTDSSINF) the chain is Extracellular. The helical transmembrane segment at 213–233 (LMVFIFAGSVQVFTIGTILIS) threads the bilayer. At 234–253 (YTIILFTILEKKSIKGIRKA) the chain is on the cytoplasmic side. Residues 254 to 274 (VSTCGAHLLSVSLYYGPLTFK) traverse the membrane as a helical segment. Over 275–287 (YLGSASPQADDQD) the chain is Extracellular. Residues 288-308 (MMESLFYTVIVPLLNPMIYSL) form a helical membrane-spanning segment. Over 309-325 (RNKQVIASFTKMFKSNV) the chain is Cytoplasmic.

Belongs to the G-protein coupled receptor 1 family.

It is found in the cell membrane. In terms of biological role, odorant receptor. This chain is Olfactory receptor 5H6 (OR5H6), found in Homo sapiens (Human).